We begin with the raw amino-acid sequence, 311 residues long: Malate dehydrogenase (311 aa).

NAD(+) contacts are provided by residues 7–13 and Asp-34; that span reads GAAGGIG. Substrate contacts are provided by Arg-81 and Arg-87. NAD(+) contacts are provided by residues Asn-94 and 117–119; that span reads ITN. The substrate site is built by Asn-119 and Arg-153. Residue His-177 is the Proton acceptor of the active site. NAD(+) is bound at residue Met-227.

Belongs to the LDH/MDH superfamily. MDH type 1 family. As to quaternary structure, homodimer.

It catalyses the reaction (S)-malate + NAD(+) = oxaloacetate + NADH + H(+). Catalyzes the reversible oxidation of malate to oxaloacetate. This Shewanella sp. (strain ANA-3) protein is Malate dehydrogenase.